The primary structure comprises 127 residues: Protein yippee-like 4 (127 aa).

A Yippee domain is found at 27–124 (RTYSCVHCRA…IEMSHMVKDN (98 aa)). Positions 31, 34, 87, and 90 each coordinate Zn(2+). A phosphothreonine mark is found at threonine 92 and threonine 93. Tyrosine 98 carries the phosphotyrosine modification.

The protein belongs to the yippee family.

It is found in the nucleus. It localises to the nucleolus. The sequence is that of Protein yippee-like 4 (YPEL4) from Chlorocebus aethiops (Green monkey).